A 67-amino-acid chain; its full sequence is Cold shock-like protein CspE (67 aa).

Residues 5 to 64 (GKVKWFNSEKGFGFIEVEGGNDVFVHFSAITGDGFKSLDEGQEVSFEVEDGNRGPQAKNV) form the CSD domain.

In terms of assembly, homodimer.

The protein localises to the cytoplasm. Functionally, can bind to ATTGG and CCAAT motifs (Y-box motifs) of single-stranded oligonucleotides. The sequence is that of Cold shock-like protein CspE (cspE) from Bacillus anthracis.